We begin with the raw amino-acid sequence, 428 residues long: Glutamate-1-semialdehyde 2,1-aminomutase (428 aa).

Lysine 265 is subject to N6-(pyridoxal phosphate)lysine.

The protein belongs to the class-III pyridoxal-phosphate-dependent aminotransferase family. HemL subfamily. In terms of assembly, homodimer. Pyridoxal 5'-phosphate serves as cofactor.

Its subcellular location is the cytoplasm. The enzyme catalyses (S)-4-amino-5-oxopentanoate = 5-aminolevulinate. Its pathway is porphyrin-containing compound metabolism; protoporphyrin-IX biosynthesis; 5-aminolevulinate from L-glutamyl-tRNA(Glu): step 2/2. This chain is Glutamate-1-semialdehyde 2,1-aminomutase, found in Legionella pneumophila (strain Paris).